Consider the following 156-residue polypeptide: ATP synthase subunit b (156 aa).

A helical transmembrane segment spans residues 7–27 (LFAQMVVFLILAWFTMKFVWP).

The protein belongs to the ATPase B chain family. In terms of assembly, F-type ATPases have 2 components, F(1) - the catalytic core - and F(0) - the membrane proton channel. F(1) has five subunits: alpha(3), beta(3), gamma(1), delta(1), epsilon(1). F(0) has three main subunits: a(1), b(2) and c(10-14). The alpha and beta chains form an alternating ring which encloses part of the gamma chain. F(1) is attached to F(0) by a central stalk formed by the gamma and epsilon chains, while a peripheral stalk is formed by the delta and b chains.

Its subcellular location is the cell inner membrane. In terms of biological role, f(1)F(0) ATP synthase produces ATP from ADP in the presence of a proton or sodium gradient. F-type ATPases consist of two structural domains, F(1) containing the extramembraneous catalytic core and F(0) containing the membrane proton channel, linked together by a central stalk and a peripheral stalk. During catalysis, ATP synthesis in the catalytic domain of F(1) is coupled via a rotary mechanism of the central stalk subunits to proton translocation. Functionally, component of the F(0) channel, it forms part of the peripheral stalk, linking F(1) to F(0). In Paraburkholderia xenovorans (strain LB400), this protein is ATP synthase subunit b.